Consider the following 465-residue polypeptide: ATP synthase subunit beta (465 aa).

148 to 155 provides a ligand contact to ATP; it reads GGAGVGKT.

This sequence belongs to the ATPase alpha/beta chains family. In terms of assembly, F-type ATPases have 2 components, CF(1) - the catalytic core - and CF(0) - the membrane proton channel. CF(1) has five subunits: alpha(3), beta(3), gamma(1), delta(1), epsilon(1). CF(0) has three main subunits: a(1), b(2) and c(9-12). The alpha and beta chains form an alternating ring which encloses part of the gamma chain. CF(1) is attached to CF(0) by a central stalk formed by the gamma and epsilon chains, while a peripheral stalk is formed by the delta and b chains.

The protein localises to the cell inner membrane. It carries out the reaction ATP + H2O + 4 H(+)(in) = ADP + phosphate + 5 H(+)(out). Its function is as follows. Produces ATP from ADP in the presence of a proton gradient across the membrane. The catalytic sites are hosted primarily by the beta subunits. The sequence is that of ATP synthase subunit beta from Neisseria meningitidis serogroup B (strain ATCC BAA-335 / MC58).